A 190-amino-acid chain; its full sequence is MSKIYIDERSNAEIVCEAIKTIGIEGATAAQLTRQLNMEKREVNKALYDLQRSAMVYSSDDIPPRWFMTTEADKPDADAMADVIIDDVSREKSMREDHKSFDDVIPAKKIIDWKGANPVTVINEYCQITRRDWSFRIESVGPSNSPTFYACVDIDGRVFDKADGKSKRDAKNNAAKLAVDKLLGYVIIRF.

Positions 5 to 70 constitute a Z-binding domain; it reads YIDERSNAEI…DIPPRWFMTT (66 aa). One can recognise a DRBM domain in the interval 117 to 184; that stretch reads NPVTVINEYC…AKLAVDKLLG (68 aa).

Belongs to the orthopoxvirus OPG065 family. Interacts with host G1P2/ISG15. Interacts with host EIF2AK2/PKR. Interacts with host ZBP1.

Functionally, RNA-binding protein that plays a role in the inhibition of multiple cellular antiviral responses activated by double-stranded RNA (dsRNA), such as inhibition of PKR activation, necroptosis, and IFN-mediated antiviral activities. Recognizes and binds Z-RNA structures via its Z-binding domain and dsRNA via its DRBM domain: RNA-binding activity is required to escape host ZBP1-dependent necroptosis. Mechanistically, the Z-binding domain binds Z-RNAs that are produced during vaccinia virus infection, thereby competing with Z-RNA detection by host ZBP1, suppressing ZBP1-dependent necroptosis. Acts as a key inhibitor of the interferon response by blocking the phosphorylation and subsequent activation of IRF3 and IRF7 kinases that are required for interferon-alpha gene expression. Inhibits NF-kappa-B activation and the ubiquitin-like protein ISG15, which is an early antiviral protein. The binding with host ISG15 subsequently blocks host ISGylation. This chain is RNA-binding protein OPG065 (OPG065), found in Vaccinia virus (strain Western Reserve) (VACV).